We begin with the raw amino-acid sequence, 432 residues long: Acetylserotonin O-methyltransferase (432 aa).

Residues Tyr-146, Trp-163, Asp-209, 235 to 237 (GDF), and Arg-252 contribute to the S-adenosyl-L-methionine site. His-255 functions as the Proton donor/acceptor in the catalytic mechanism. Residues Asp-256, Asn-302, and Gln-306 each coordinate substrate. The segment at 373–432 (VPGARSDAAGTGSGTGNTGSGIMLQGETLESEVSAPQAGSDVGGAGNEPRSGTLKQGDWK) is disordered.

The protein belongs to the class I-like SAM-binding methyltransferase superfamily. Cation-independent O-methyltransferase family. As to quaternary structure, homodimer. Expressed predominantly in the pineal gland (at protein level). Very low expression, if any, in the retina.

The catalysed reaction is N-acetylserotonin + S-adenosyl-L-methionine = melatonin + S-adenosyl-L-homocysteine + H(+). The protein operates within aromatic compound metabolism; melatonin biosynthesis; melatonin from serotonin: step 1/2. In terms of biological role, catalyzes the transfer of a methyl group onto N-acetylserotonin, producing melatonin (N-acetyl-5-methoxytryptamine). In Rattus norvegicus (Rat), this protein is Acetylserotonin O-methyltransferase (Asmt).